A 285-amino-acid polypeptide reads, in one-letter code: MKYIGAHVSAAGGLANAAIRAAEIDATAFALFTKNQRQWRAAPLTTQTIDEFKAACEKYHYTSAQILPHDSYLINLGHPVTEALEKSRDAFIDEMQRCEQLGLSLLNFHPGSHLMQISEEDCLARIAESINIALDKTQGVTAVIENTAGQGSNLGFKFEHLAAIIDGVEDKSRVGVCIDTCHAFAAGYDLRTPAECEKTFADFARIVGFKYLRGMHLNDAKSTFGSRVDRHHSLGEDNIGHDAFRWIMQDDRFDGIPLILETINPDIWAEEIAWLKAQQTEKAVA.

H69, H109, E145, D179, H182, H216, D229, H231, and E261 together coordinate Zn(2+).

The protein belongs to the AP endonuclease 2 family. It depends on Zn(2+) as a cofactor.

The catalysed reaction is Endonucleolytic cleavage to 5'-phosphooligonucleotide end-products.. Functionally, endonuclease IV plays a role in DNA repair. It cleaves phosphodiester bonds at apurinic or apyrimidinic (AP) sites, generating a 3'-hydroxyl group and a 5'-terminal sugar phosphate. This is Probable endonuclease 4 from Shigella boydii serotype 18 (strain CDC 3083-94 / BS512).